A 250-amino-acid polypeptide reads, in one-letter code: Entry-fusion complex associated protein OPG095 (250 aa).

Gly2 carries the N-myristoyl glycine; by host lipid modification. The tract at residues 2 to 12 (GAAASIQTTVN) is targeting to MV membrane. Topologically, residues 2-183 (GAAASIQTTV…IAPKQVAGTG (182 aa)) are virion surface. Cystine bridges form between Cys34–Cys57, Cys49–Cys136, and Cys116–Cys158. A helical transmembrane segment spans residues 184–204 (VQFYMIVIGVIILAALFMYYA). At 205–250 (KRMLFTSTNDKIKLILANKENVHWTTYMDTFFRTSPMVIATTDMQN) the chain is on the intravirion side.

Belongs to the orthopoxvirus OPG095 family. As to quaternary structure, component of the entry fusion complex (EFC) composed of OPG053/F9, OPG076/O3, OPG086/G3, OPG094/G9, OPG095/L1, OPG099/L5, OPG107/H2, OPG143/A16, OPG104/J5, OPG147/A21 and OPG155/A28. Except for OPG095/L1 and OPG053/F9, each of the EFC proteins is required for assembly or stability of the complex. Post-translationally, myristoylated. In terms of processing, disulfid bonds are oxidized in the cytoplasm by OPG088 protein. Unglycosylated because produced in viral factories instead of the classic ER -Golgi route.

The protein localises to the virion membrane. Functionally, component of the entry fusion complex (EFC), which consists of 11 proteins. During cell infection, this complex mediates entry of the virion core into the host cytoplasm by a two-step mechanism consisting of lipid mixing of the viral and cellular membranes and subsequent pore formation. This chain is Entry-fusion complex associated protein OPG095 (OPG099), found in Bos taurus (Bovine).